The chain runs to 59 residues: uncharacterized protein (59 aa).

This is an uncharacterized protein from Archaeoglobus fulgidus (strain ATCC 49558 / DSM 4304 / JCM 9628 / NBRC 100126 / VC-16).